A 378-amino-acid chain; its full sequence is Non-functional pseudokinase ZRK6 (378 aa).

The Protein kinase domain maps to 34–378 (DGKCNPIKNF…SNNRSQMSSI (345 aa)). Residues 40 to 48 (IKNFSYDQI) and Lys-83 each bind ATP.

The protein belongs to the protein kinase superfamily. Ser/Thr protein kinase family. ZRK subfamily. In terms of assembly, interacts with RPP13L4/ZAR1.

This is Non-functional pseudokinase ZRK6 from Arabidopsis thaliana (Mouse-ear cress).